The primary structure comprises 153 residues: Ribosomal RNA large subunit methyltransferase H (153 aa).

S-adenosyl-L-methionine is bound by residues Leu-70, Gly-102, and 121–126 (LSRMTF).

It belongs to the RNA methyltransferase RlmH family. As to quaternary structure, homodimer.

Its subcellular location is the cytoplasm. It catalyses the reaction pseudouridine(1915) in 23S rRNA + S-adenosyl-L-methionine = N(3)-methylpseudouridine(1915) in 23S rRNA + S-adenosyl-L-homocysteine + H(+). Functionally, specifically methylates the pseudouridine at position 1915 (m3Psi1915) in 23S rRNA. The chain is Ribosomal RNA large subunit methyltransferase H from Geotalea daltonii (strain DSM 22248 / JCM 15807 / FRC-32) (Geobacter daltonii).